Here is a 346-residue protein sequence, read N- to C-terminus: MKQIINPLKGNDNKIPIWFMRQAGRYLPEYKKVRETTKNFLDFCYDVNKATEVTLQPIKRYGFDAAIIFSDILVLPHAFGWEVDFKENIGPILKQFKSQEDFKYLQINPNDKLEKVYEIIKKVKKELPSPTSLIGFAGSPWTVMSYMLEGKGKQDFKTSKKFIYENKILAEELLNFITEKTADHLINQAKSGVDVLKLFDSWSGVLAEEEFTEFVIEPTKKIVLKVKEVFPKTPIIAFPKGAGLLYEKFIKEVPIDILAVDQMVPLEKMKEWSDKVIVQGNLDPVVLLTNKEIIKEKTYKILQAMKGKNFIFNLGHGILPETPTENVEFLTEYVRLYEEKNSNSTF.

Residues R21–R25, D71, Y146, S201, and H316 contribute to the substrate site.

The protein belongs to the uroporphyrinogen decarboxylase family. Homodimer.

It is found in the cytoplasm. It catalyses the reaction uroporphyrinogen III + 4 H(+) = coproporphyrinogen III + 4 CO2. Its pathway is porphyrin-containing compound metabolism; protoporphyrin-IX biosynthesis; coproporphyrinogen-III from 5-aminolevulinate: step 4/4. Functionally, catalyzes the decarboxylation of four acetate groups of uroporphyrinogen-III to yield coproporphyrinogen-III. This is Uroporphyrinogen decarboxylase from Rickettsia massiliae (strain Mtu5).